Consider the following 353-residue polypeptide: Guanine nucleotide-binding protein subunit alpha (353 aa).

A disordered region spans residues 1–25; it reads MGCGMSTEDKEGKARNEEIENQLKR. A lipid anchor (N-myristoyl glycine) is attached at Gly2. Residue Cys3 is the site of S-palmitoyl cysteine attachment. Residues 7 to 25 are compositionally biased toward basic and acidic residues; the sequence is TEDKEGKARNEEIENQLKR. A G-alpha domain is found at 32–353; it reads NEIKMLLLGA…QENLRLCGLI (322 aa). The interval 35 to 48 is G1 motif; it reads KMLLLGAGESGKST. The GTP site is built by Glu43, Ser44, Gly45, Lys46, Ser47, Thr48, Asp150, Leu175, Thr181, Gly203, Asn269, Lys270, Asp272, and Ala325. Ser47 is a Mg(2+) binding site. Residues 173–181 form a G2 motif region; sequence DVLRSRVKT. Thr181 contributes to the Mg(2+) binding site. The G3 motif stretch occupies residues 196-205; the sequence is YRMFDVGGQR. The interval 265 to 272 is G4 motif; that stretch reads ILFLNKID. Residues 323 to 328 are G5 motif; the sequence is TCATDT.

It belongs to the G-alpha family. G(q) subfamily. G proteins are composed of 3 units; alpha, beta and gamma. The alpha chain contains the guanine nucleotide binding site. It depends on Mg(2+) as a cofactor.

In terms of biological role, guanine nucleotide-binding proteins (G proteins) are involved as modulators or transducers in various transmembrane signaling systems. In Colletotrichum trifolii, this protein is Guanine nucleotide-binding protein subunit alpha (CTG1).